Reading from the N-terminus, the 110-residue chain is MASSSGQNGIQLLLAAEQEAQHIVNNARTAKQARLKQAKEEAEKEIAEFRAYMEAEFQRKLEQTSGDSGANVKRLEQETDAKIEHLKTEAERVSPDVVQMLLRHVTTVKN.

The protein belongs to the V-ATPase G subunit family. V-ATPase is a heteromultimeric enzyme composed of a peripheral catalytic V1 complex (components A to H) attached to an integral membrane V0 proton pore complex (components: a, c, c', c'' and d).

Catalytic subunit of the peripheral V1 complex of vacuolar ATPase (V-ATPase). V-ATPase is responsible for acidifying a variety of intracellular compartments in eukaryotic cells. The sequence is that of V-type proton ATPase subunit G 1 (VATG1) from Nicotiana tabacum (Common tobacco).